Here is a 639-residue protein sequence, read N- to C-terminus: PTS-dependent dihydroxyacetone kinase operon regulatory protein (639 aa).

A sensor domain region spans residues 1 to 318 (MSGAFNNDGR…MRQLMTSQLG (318 aa)). Residues 52 to 189 (AMLTLGQAAL…AIAREVGNLL (138 aa)) form the GAF domain. A PAS domain is found at 203 to 265 (NQLNALLESM…AVLQQAIKQA (63 aa)). Positions 327-552 (MPQDDPQTRR…LYSVIENLAL (226 aa)) constitute a Sigma-54 factor interaction domain. ATP-binding positions include 355–362 (GEEGVGKA) and 415–424 (AHGGTLFLEK).

Homodimer. DhaR forms complexes with DhaK and DhaL-ADP.

In terms of biological role, positively regulates the dhaKLM operon from a sigma-70 promoter. Represses its own expression. The polypeptide is PTS-dependent dihydroxyacetone kinase operon regulatory protein (Escherichia coli (strain K12)).